Consider the following 189-residue polypeptide: Putative manganese efflux pump MntP (189 aa).

6 consecutive transmembrane segments (helical) span residues 3 to 23 (PVAT…AAIG), 41 to 61 (LIFG…GKAA), 62 to 82 (AQYV…VLGA), 104 to 124 (FWLL…VGAG), 132 to 152 (IYST…IGVM), and 168 to 188 (AGGI…LNIF).

The protein belongs to the MntP (TC 9.B.29) family.

It localises to the cell inner membrane. Its function is as follows. Probably functions as a manganese efflux pump. This chain is Putative manganese efflux pump MntP, found in Paraburkholderia phytofirmans (strain DSM 17436 / LMG 22146 / PsJN) (Burkholderia phytofirmans).